Consider the following 685-residue polypeptide: Putative mannosyltransferase YycA (685 aa).

6 helical membrane-spanning segments follow: residues 6 to 26, 68 to 88, 109 to 129, 154 to 174, 176 to 196, and 204 to 224; these read FDAALILILLAAAFLNTYHIW, VLWIQTIFALIFGVHTWSVII, FGVGAARIAALVMALTPIAVA, AVKQGKLVWLLTAFALIGLAF, MKMMQAFMVLPAFVLFYLIAS, and IGSLLLSLVLLTGLSLSWAIA. A disordered region spans residues 269–347; that stretch reads MNAAGGGNMQ…GGGGGKSVNM (79 aa). Polar residues predominate over residues 277 to 286; that stretch reads MQNQDNMQAP. Residues 287 to 303 are compositionally biased toward low complexity; sequence NGNGSSFSQNGNQSFGN. Residues 318-343 show a composition bias toward gly residues; the sequence is LNGGGGTPPTGGNGPGNGGPGGGGGK. The next 7 membrane-spanning stretches (helical) occupy residues 363-383, 399-419, 422-442, 455-475, 479-499, 513-533, and 573-593; these read LSGQISWMLPFSLIGLLGAII, TLFWAAWLVPVAGFFSIAGFF, YYLIMLAPPIAALSGIGWYTM, YLLPAAVLITAVFQVYILSAY, IGSVWMYVLGLLGLGITLALL, IISLCVLLLTPVYWSATPLLY, and TGEEYLFATLTTVTAAPYIIY. Residues 652 to 685 are disordered; that stretch reads TSDEYSGSSSSTNSVQGMRRGPGGESQQTLYLVE. A compositionally biased stretch (low complexity) spans 654–665; the sequence is DEYSGSSSSTNS. Polar residues predominate over residues 676–685; the sequence is ESQQTLYLVE.

Belongs to the glycosyltransferase 39 family.

The protein localises to the cell membrane. The chain is Putative mannosyltransferase YycA (yycA) from Bacillus subtilis (strain 168).